Reading from the N-terminus, the 282-residue chain is Bis(5'-nucleosyl)-tetraphosphatase, symmetrical (282 aa).

The protein belongs to the Ap4A hydrolase family.

It catalyses the reaction P(1),P(4)-bis(5'-adenosyl) tetraphosphate + H2O = 2 ADP + 2 H(+). Its function is as follows. Hydrolyzes diadenosine 5',5'''-P1,P4-tetraphosphate to yield ADP. The polypeptide is Bis(5'-nucleosyl)-tetraphosphatase, symmetrical (Sodalis glossinidius (strain morsitans)).